The primary structure comprises 306 residues: Mitochondrial substrate carrier family protein ucpA (306 aa).

At 1–15 (MSVNLNNNKNNKNKV) the chain is on the mitochondrial intermembrane side. Solcar repeat units lie at residues 13-103 (NKVA…ISNA), 112-204 (YFFL…CKNL), and 211-301 (DGIY…FKKL). The helical transmembrane segment at 16-36 (AIGFISGSLASICATTVTNPI) threads the bilayer. At 37 to 83 (ELVKTRLQLQGELQLSQRIYNGVWDAFKQIYKTEGIRGLQSGLIPAY) the chain is on the mitochondrial matrix side. A helical membrane pass occupies residues 84–103 (FSQATMQGIRLGSFDLISNA). Over 104 to 117 (LGAKPNQDYFFLKN) the chain is Mitochondrial intermembrane. Residues 118–138 (LLAGATAGAIGAAAGSPFDLV) form a helical membrane-spanning segment. Topologically, residues 139-174 (KVRMQAANMYKNDPQFVGYSSSFAAFKQIIQKEGFK) are mitochondrial matrix. Residues 175–195 (GLTRGMLTSAQRTAVGSAIQL) form a helical membrane-spanning segment. Over 196 to 211 (STYGSCKNLVLNFVDD) the chain is Mitochondrial intermembrane. Residues 212-232 (GIYAYIISSMVAGFIVTFGMN) traverse the membrane as a helical segment. The Mitochondrial matrix segment spans residues 233–276 (PFDVARTRLYFQGKGNSHGEIYKGLMDCVYKTVKKEGFGAVYKG). A helical transmembrane segment spans residues 277-295 (FWAHYLRLGPHTILTLVFW). Topologically, residues 296-306 (EQFKKLFSGEL) are mitochondrial intermembrane.

It belongs to the mitochondrial carrier (TC 2.A.29) family.

The protein localises to the mitochondrion inner membrane. Its function is as follows. Mitochondrial solute carriers shuttle metabolites, nucleotides, and cofactors through the mitochondrial inner membrane. Transports oxaloacetate and sulfate. The protein is Mitochondrial substrate carrier family protein ucpA (ucpA) of Dictyostelium discoideum (Social amoeba).